Here is a 206-residue protein sequence, read N- to C-terminus: Ribosomal RNA small subunit methyltransferase G (206 aa).

Residues glycine 71, phenylalanine 76, 125–126 (IE), and arginine 139 contribute to the S-adenosyl-L-methionine site.

It belongs to the methyltransferase superfamily. RNA methyltransferase RsmG family.

The protein localises to the cytoplasm. The catalysed reaction is guanosine(527) in 16S rRNA + S-adenosyl-L-methionine = N(7)-methylguanosine(527) in 16S rRNA + S-adenosyl-L-homocysteine. In terms of biological role, specifically methylates the N7 position of guanine in position 527 of 16S rRNA. This is Ribosomal RNA small subunit methyltransferase G from Cereibacter sphaeroides (strain ATCC 17023 / DSM 158 / JCM 6121 / CCUG 31486 / LMG 2827 / NBRC 12203 / NCIMB 8253 / ATH 2.4.1.) (Rhodobacter sphaeroides).